A 352-amino-acid polypeptide reads, in one-letter code: Biotin synthase (352 aa).

In terms of domain architecture, Radical SAM core spans 44-262; it reads NRVQVSTLLS…LAVARIMMPK (219 aa). 3 residues coordinate [4Fe-4S] cluster: cysteine 59, cysteine 63, and cysteine 66. Positions 103, 134, 194, and 266 each coordinate [2Fe-2S] cluster.

Belongs to the radical SAM superfamily. Biotin synthase family. Homodimer. The cofactor is [4Fe-4S] cluster. [2Fe-2S] cluster serves as cofactor.

The catalysed reaction is (4R,5S)-dethiobiotin + (sulfur carrier)-SH + 2 reduced [2Fe-2S]-[ferredoxin] + 2 S-adenosyl-L-methionine = (sulfur carrier)-H + biotin + 2 5'-deoxyadenosine + 2 L-methionine + 2 oxidized [2Fe-2S]-[ferredoxin]. It participates in cofactor biosynthesis; biotin biosynthesis; biotin from 7,8-diaminononanoate: step 2/2. Catalyzes the conversion of dethiobiotin (DTB) to biotin by the insertion of a sulfur atom into dethiobiotin via a radical-based mechanism. This Ectopseudomonas mendocina (strain ymp) (Pseudomonas mendocina) protein is Biotin synthase.